We begin with the raw amino-acid sequence, 593 residues long: Transcriptional repressor p66-beta (593 aa).

Ser-17 bears the Phosphoserine mark. Glycyl lysine isopeptide (Lys-Gly) (interchain with G-Cter in SUMO2) cross-links involve residues Lys-33, Lys-66, and Lys-97. Residues 62–123 (ELPTKQDGSG…PERGRLTPSP (62 aa)) are disordered. Basic and acidic residues-rich tracts occupy residues 74-100 (GYEE…KENI) and 108-118 (SARRSEPERGR). At Thr-120 the chain carries Phosphothreonine. 4 positions are modified to phosphoserine: Ser-122, Ser-129, Ser-134, and Ser-135. Positions 140–194 (SRMEERLKAANLEMFKGKGIEERQQLIKQLRDELRLEEARLVLLKKLRQSQLQKE) form a coiled coil. Lys-147 is covalently cross-linked (Glycyl lysine isopeptide (Lys-Gly) (interchain with G-Cter in SUMO2)). Residues 165–195 (LIKQLRDELRLEEARLVLLKKLRQSQLQKEN) are CR1; interaction with MBD2 and MBD3. Residue Lys-199 forms a Glycyl lysine isopeptide (Lys-Gly) (interchain with G-Cter in SUMO2) linkage. Ser-208 carries the phosphoserine modification. The interval 213–235 (SPAHVGQQGLSKLPSRPGAQGVE) is disordered. Lys-281 is covalently cross-linked (Glycyl lysine isopeptide (Lys-Gly) (interchain with G-Cter in SUMO2)). 3 positions are modified to phosphoserine: Ser-333, Ser-338, and Ser-340. The CR2; histone tail-binding stretch occupies residues 340–480 (SAMTDAANSQ…QEQEIEQRLQ (141 aa)). Residues Lys-353, Lys-454, and Lys-467 each participate in a glycyl lysine isopeptide (Lys-Gly) (interchain with G-Cter in SUMO2) cross-link. The segment at 414-467 (RVEPFVCAQCRTDFTPHWKQEKNGKILCEQCMTSNQKKALKAEHTNRLKNAFVK) adopts a GATA-type zinc-finger fold. Residues 449 to 482 (QKKALKAEHTNRLKNAFVKALQQEQEIEQRLQQQ) are a coiled coil. Phosphoserine is present on Ser-486. Residue Lys-498 forms a Glycyl lysine isopeptide (Lys-Gly) (interchain with G-Cter in SUMO2) linkage.

In terms of assembly, homooligomer. Component of the nucleosome remodeling and deacetylase (NuRD) repressor complex, composed of core proteins MTA1, MTA2, MTA3, RBBP4, RBBP7, HDAC1, HDAC2, MBD2, MBD3, and peripherally associated proteins CDK2AP1, CDK2AP2, GATAD2A, GATAD2B, CHD3, CHD4 and CHD5. The exact stoichiometry of the NuRD complex is unknown, and some subunits such as MBD2 and MBD3, GATAD2A and GATAD2B, and CHD3, CHD4 and CHD5 define mutually exclusive NuRD complexes. Interacts with MBD2; this is required for the enhancement of MBD2-mediated repression and for targeting to the chromatin. Interacts with MBD3. Component of the MeCP1 histone deacetylase complex. Interacts with histone tails, including that of histones H2A, H2B, H3 and H4. Interacts with ERCC6. As to expression, widely expressed.

Its subcellular location is the nucleus speckle. It is found in the nucleus. The protein localises to the chromosome. In terms of biological role, transcriptional repressor. Acts as a component of the histone deacetylase NuRD complex which participates in the remodeling of chromatin. Enhances MBD2-mediated repression. Efficient repression requires the presence of GATAD2A. Targets MBD3 to discrete loci in the nucleus. May play a role in synapse development. The protein is Transcriptional repressor p66-beta (GATAD2B) of Homo sapiens (Human).